The following is a 326-amino-acid chain: MATH domain and coiled-coil domain-containing protein At3g58370 (326 aa).

Positions aspartate 7–isoleucine 133 constitute an MATH domain. The stretch at leucine 259 to aspartate 312 forms a coiled coil.

In Arabidopsis thaliana (Mouse-ear cress), this protein is MATH domain and coiled-coil domain-containing protein At3g58370.